Consider the following 949-residue polypeptide: Phosphocholine transferase AnkX (949 aa).

A Fido domain is found at 155–289 (LNPEQIPDLA…IFNTVEIIEQ (135 aa)). 10 ANK repeats span residues 391-420 (VGKT…DLSL), 424-453 (DGKT…SQED), 464-494 (HGKT…QINE), 498-527 (SGSS…DISD), 554-583 (LNKE…DIDI), 588-617 (DKAT…NTRL), 658-687 (NGNP…RVDF), 691-720 (LGNN…TLLH), 725-767 (ERRN…DLNK), and 771-800 (KGKT…HTNI).

It is found in the secreted. It localises to the host cytoplasm. It catalyses the reaction [Rab1 protein]-L-serine + CDP-choline = [Rab1 protein]-O-phosphocholine-L-serine + CMP + H(+). Functionally, virulence effector that plays a role in hijacking the host vesicular trafficking by recruiting the small guanosine triphosphatase (GTPase) Rab1 to the cytosolic face of the Legionella-containing vacuole (LCVs). Acts as a phosphocholine transferase by mediating the addition of phosphocholine to Ser residues of host RAB1 (RAB1A, RAB1B or RAB1C) and RAB35, leading to displacement of GDP dissociation inhibitors (GDI). Phosphocholination of target proteins also impairs accessibility to GTPase effector LepB. Can act on both GDP-bound and GTP-bound Rab proteins. In Legionella pneumophila subsp. pneumophila (strain Philadelphia 1 / ATCC 33152 / DSM 7513), this protein is Phosphocholine transferase AnkX (ankX).